Here is a 332-residue protein sequence, read N- to C-terminus: Holliday junction branch migration complex subunit RuvB (332 aa).

Residues 1-181 (MSRILDNEIM…FGITGHMEYY (181 aa)) form a large ATPase domain (RuvB-L) region. ATP contacts are provided by residues Leu20, Arg21, Gly62, Lys65, Thr66, Thr67, 128-130 (EDF), Arg171, Tyr181, and Arg218. Mg(2+) is bound at residue Thr66. Residues 182-252 (AHAGLTEIVE…ITDKALTMLD (71 aa)) are small ATPAse domain (RuvB-S). The tract at residues 255–332 (HEGLDYVDQK…EHLGYEYSEK (78 aa)) is head domain (RuvB-H). DNA contacts are provided by Arg291, Arg310, Arg312, and Arg315.

The protein belongs to the RuvB family. As to quaternary structure, homohexamer. Forms an RuvA(8)-RuvB(12)-Holliday junction (HJ) complex. HJ DNA is sandwiched between 2 RuvA tetramers; dsDNA enters through RuvA and exits via RuvB. An RuvB hexamer assembles on each DNA strand where it exits the tetramer. Each RuvB hexamer is contacted by two RuvA subunits (via domain III) on 2 adjacent RuvB subunits; this complex drives branch migration. In the full resolvosome a probable DNA-RuvA(4)-RuvB(12)-RuvC(2) complex forms which resolves the HJ.

The protein localises to the cytoplasm. It carries out the reaction ATP + H2O = ADP + phosphate + H(+). The RuvA-RuvB-RuvC complex processes Holliday junction (HJ) DNA during genetic recombination and DNA repair, while the RuvA-RuvB complex plays an important role in the rescue of blocked DNA replication forks via replication fork reversal (RFR). RuvA specifically binds to HJ cruciform DNA, conferring on it an open structure. The RuvB hexamer acts as an ATP-dependent pump, pulling dsDNA into and through the RuvAB complex. RuvB forms 2 homohexamers on either side of HJ DNA bound by 1 or 2 RuvA tetramers; 4 subunits per hexamer contact DNA at a time. Coordinated motions by a converter formed by DNA-disengaged RuvB subunits stimulates ATP hydrolysis and nucleotide exchange. Immobilization of the converter enables RuvB to convert the ATP-contained energy into a lever motion, pulling 2 nucleotides of DNA out of the RuvA tetramer per ATP hydrolyzed, thus driving DNA branch migration. The RuvB motors rotate together with the DNA substrate, which together with the progressing nucleotide cycle form the mechanistic basis for DNA recombination by continuous HJ branch migration. Branch migration allows RuvC to scan DNA until it finds its consensus sequence, where it cleaves and resolves cruciform DNA. This chain is Holliday junction branch migration complex subunit RuvB, found in Streptococcus pneumoniae (strain JJA).